The primary structure comprises 248 residues: Probable transcriptional regulatory protein RHE_CH03475 (248 aa).

It belongs to the TACO1 family.

It is found in the cytoplasm. The polypeptide is Probable transcriptional regulatory protein RHE_CH03475 (Rhizobium etli (strain ATCC 51251 / DSM 11541 / JCM 21823 / NBRC 15573 / CFN 42)).